We begin with the raw amino-acid sequence, 213 residues long: MARVRVRQHVNPLSQKFQVVTTWPDWQQVYADCDRPLHLDIGCARGRFLLAMATAQPEWNYLGLEIREPLVDEANAIARERELTNLYYHFSNANLDLEPLLRSLPTGILQRVSIQFPDPWFKKRHQKRRVVQPELVQALATALPAGAEVFLQSDVLEVQAEMCEHFAAEPRFQRTCLDWLPENPLPVPTEREIAVQNKQLPVYRALFIRQPAD.

S-adenosyl-L-methionine-binding residues include aspartate 40, glutamate 65, asparagine 92, and aspartate 118. The active site involves aspartate 118. Positions 122 and 154 each coordinate substrate.

It belongs to the class I-like SAM-binding methyltransferase superfamily. TrmB family.

It catalyses the reaction guanosine(46) in tRNA + S-adenosyl-L-methionine = N(7)-methylguanosine(46) in tRNA + S-adenosyl-L-homocysteine. Its pathway is tRNA modification; N(7)-methylguanine-tRNA biosynthesis. In terms of biological role, catalyzes the formation of N(7)-methylguanine at position 46 (m7G46) in tRNA. This chain is tRNA (guanine-N(7)-)-methyltransferase, found in Synechococcus elongatus (strain ATCC 33912 / PCC 7942 / FACHB-805) (Anacystis nidulans R2).